The chain runs to 315 residues: Glutaminase (315 aa).

Serine 70, asparagine 120, glutamate 166, asparagine 173, tyrosine 197, tyrosine 249, and valine 267 together coordinate substrate.

Belongs to the glutaminase family. Homotetramer.

The enzyme catalyses L-glutamine + H2O = L-glutamate + NH4(+). The sequence is that of Glutaminase from Mesorhizobium japonicum (strain LMG 29417 / CECT 9101 / MAFF 303099) (Mesorhizobium loti (strain MAFF 303099)).